The primary structure comprises 133 residues: Probable nuclear transport factor 2 (133 aa).

The 119-residue stretch at 10-128 (VAKAFIQHYY…YFIGNEIFRL (119 aa)) folds into the NTF2 domain.

Its subcellular location is the cytoplasm. Facilitates protein transport into the nucleus. Could be part of a multicomponent system of cytosolic factors that assemble at the pore complex during nuclear import. The polypeptide is Probable nuclear transport factor 2 (ran-4) (Caenorhabditis elegans).